The sequence spans 169 residues: Regulator of sigma D (169 aa).

This sequence belongs to the Rsd/AlgQ family. As to quaternary structure, interacts with RpoD.

The protein resides in the cytoplasm. In terms of biological role, binds RpoD and negatively regulates RpoD-mediated transcription activation by preventing the interaction between the primary sigma factor RpoD with the catalytic core of the RNA polymerase and with promoter DNA. May be involved in replacement of the RNA polymerase sigma subunit from RpoD to RpoS during the transition from exponential growth to the stationary phase. This is Regulator of sigma D from Yersinia pseudotuberculosis serotype O:1b (strain IP 31758).